Consider the following 583-residue polypeptide: Trehalase (583 aa).

A signal peptide spans 1 to 23 (MPGRTWELCLLLLLGLGLGSQEA). Asn78 carries an N-linked (GlcNAc...) asparagine glycan. Substrate-binding positions include Arg168, 175–176 (WD), Asn212, and 221–223 (RSQ). Residues Asn239 and Asn261 are each glycosylated (N-linked (GlcNAc...) asparagine). Residues 286–288 (RPE) and Gly319 contribute to the substrate site. The Proton donor/acceptor role is filled by Asp321. A glycan (N-linked (GlcNAc...) asparagine) is linked at Asn369. The active-site Proton donor/acceptor is Glu514. Residue Glu529 participates in substrate binding. The GPI-anchor amidated serine moiety is linked to residue Ser556. Positions 557 to 583 (GAKLAFLEPHCLAATLLPSLLLSLLPW) are cleaved as a propeptide — removed in mature form.

It belongs to the glycosyl hydrolase 37 family. In terms of assembly, homodimer; disulfide-linked. Expressed in kidney, liver and small intestine. Also more weakly expressed in pancreas.

It localises to the cell membrane. It carries out the reaction alpha,alpha-trehalose + H2O = alpha-D-glucose + beta-D-glucose. Intestinal trehalase is probably involved in the hydrolysis of ingested trehalose. This Homo sapiens (Human) protein is Trehalase.